The primary structure comprises 273 residues: NADH-ubiquinone oxidoreductase 29.9 kDa subunit, mitochondrial (273 aa).

The N-terminal 8 residues, 1-8 (MRAALRLL), are a transit peptide targeting the mitochondrion.

Belongs to the complex I NDUFA5 subunit family. In terms of assembly, complex I is composed of about 40 different subunits.

The protein resides in the mitochondrion inner membrane. Accessory subunit of the mitochondrial membrane respiratory chain NADH dehydrogenase (Complex I), that is believed not to be involved in catalysis. Complex I functions in the transfer of electrons from NADH to the respiratory chain. The immediate electron acceptor for the enzyme is believed to be ubiquinone. The sequence is that of NADH-ubiquinone oxidoreductase 29.9 kDa subunit, mitochondrial (nuo-32) from Neurospora crassa (strain ATCC 24698 / 74-OR23-1A / CBS 708.71 / DSM 1257 / FGSC 987).